Here is a 218-residue protein sequence, read N- to C-terminus: MSYTWLITRASSGRGAAIALAALEAGHKVIAGARNPAKASQVRPEIQNQGGTWLRLDDSTADVRHVIAKAAKEHGLNVLVNNAGGYALRGVLEDFSETELYQQMETNFFGPIRAIQGALPWSRAQKPGTIFNISSTSDITGFTGFSLYAASKAALEGASEALYGELALFGIRVLVVQPGASRTKFQSAGPRPAVSEACVGTTVDAILQRAVGMAAERR.

Residues Lys38, Asp57, and Asn82 each contribute to the NADP(+) site. The active-site Proton donor is the Ser134. Tyr148, Lys152, and Thr183 together coordinate NADP(+). The Proton acceptor role is filled by Tyr148. Lys152 serves as the catalytic Lowers pKa of active site Tyr.

This sequence belongs to the short-chain dehydrogenases/reductases (SDR) family.

It participates in pigment biosynthesis. Oxidoreductase; part of the gene cluster that mediates the biosynthesis of the bianthraquinone cladofulvin, a conidial pigment not required for virulence but that plays a role in fitness and resistance to environmental stresses including UV light and low-temperature stress. The pathway begins with the synthesis of atrochrysone thioester by the polyketide synthase (PKS) claG. The atrochrysone carboxyl ACP thioesterase claF then breaks the thioester bond and releases the atrochrysone carboxylic acid from claG. This compound is decarboxylated by claH to yield emodin, which is further converted to chrysophanol hydroquinone by the reductase claC and the dehydratase claB. The cytochrome P450 monooxygenase claM then catalyzes the dimerization of nataloe-emodin to cladofulvin. The protein is Oxidoreductase claN of Passalora fulva (Tomato leaf mold).